Reading from the N-terminus, the 475-residue chain is Bifunctional protein HldE (475 aa).

The interval 1 to 318 (MKITLPEFEK…ANALYTEQET (318 aa)) is ribokinase. 195–198 (NMSE) serves as a coordination point for ATP. Asp-264 is a catalytic residue. A cytidylyltransferase region spans residues 344-475 (MTNGCFDILH…DIIKTIRERG (132 aa)).

It in the N-terminal section; belongs to the carbohydrate kinase PfkB family. This sequence in the C-terminal section; belongs to the cytidylyltransferase family. Homodimer.

It carries out the reaction D-glycero-beta-D-manno-heptose 7-phosphate + ATP = D-glycero-beta-D-manno-heptose 1,7-bisphosphate + ADP + H(+). The catalysed reaction is D-glycero-beta-D-manno-heptose 1-phosphate + ATP + H(+) = ADP-D-glycero-beta-D-manno-heptose + diphosphate. It functions in the pathway nucleotide-sugar biosynthesis; ADP-L-glycero-beta-D-manno-heptose biosynthesis; ADP-L-glycero-beta-D-manno-heptose from D-glycero-beta-D-manno-heptose 7-phosphate: step 1/4. The protein operates within nucleotide-sugar biosynthesis; ADP-L-glycero-beta-D-manno-heptose biosynthesis; ADP-L-glycero-beta-D-manno-heptose from D-glycero-beta-D-manno-heptose 7-phosphate: step 3/4. Functionally, catalyzes the phosphorylation of D-glycero-D-manno-heptose 7-phosphate at the C-1 position to selectively form D-glycero-beta-D-manno-heptose-1,7-bisphosphate. In terms of biological role, catalyzes the ADP transfer from ATP to D-glycero-beta-D-manno-heptose 1-phosphate, yielding ADP-D-glycero-beta-D-manno-heptose. This chain is Bifunctional protein HldE, found in Aeromonas hydrophila subsp. hydrophila (strain ATCC 7966 / DSM 30187 / BCRC 13018 / CCUG 14551 / JCM 1027 / KCTC 2358 / NCIMB 9240 / NCTC 8049).